The chain runs to 230 residues: Probable endonuclease C19F8.04c (230 aa).

The chain crosses the membrane as a helical span at residues 10-27 (AIIGTGLITTSIGGFFFL). The TNase-like domain maps to 55–216 (KTMFGYVTRV…KKKKLSLWSQ (162 aa)). The active site involves Arg-104. Asp-109 serves as a coordination point for Ca(2+). Catalysis depends on residues Glu-112 and Arg-152.

Belongs to the LCL3 family.

Its subcellular location is the mitochondrion. It is found in the membrane. The chain is Probable endonuclease C19F8.04c from Schizosaccharomyces pombe (strain 972 / ATCC 24843) (Fission yeast).